We begin with the raw amino-acid sequence, 142 residues long: Large ribosomal subunit protein uL11 (142 aa).

Belongs to the universal ribosomal protein uL11 family. In terms of assembly, part of the ribosomal stalk of the 50S ribosomal subunit. Interacts with L10 and the large rRNA to form the base of the stalk. L10 forms an elongated spine to which L12 dimers bind in a sequential fashion forming a multimeric L10(L12)X complex. In terms of processing, one or more lysine residues are methylated.

Its function is as follows. Forms part of the ribosomal stalk which helps the ribosome interact with GTP-bound translation factors. This Nitrobacter winogradskyi (strain ATCC 25391 / DSM 10237 / CIP 104748 / NCIMB 11846 / Nb-255) protein is Large ribosomal subunit protein uL11.